The sequence spans 2224 residues: Coagulation factor V (2224 aa).

The first 28 residues, 1–28, serve as a signal peptide directing secretion; sequence MFPGCPRLWVLVVLGTSWVGWGSQGTEA. Plastocyanin-like domains are found at residues 30–193, 203–329, 348–526, and 536–684; these read QLRQ…LLIC, TQKT…IKNC, KRWE…LLIC, and IQRA…DVKC. 2 consecutive F5/8 type A domains span residues 30–329 and 348–684; these read QLRQ…IKNC and KRWE…DVKC. Asparagine 51 and asparagine 55 each carry an N-linked (GlcNAc...) asparagine glycan. Ca(2+)-binding residues include aspartate 139 and aspartate 140. An intrachain disulfide couples cysteine 167 to cysteine 193. Asparagine 239, asparagine 297, asparagine 382, asparagine 460, and asparagine 468 each carry an N-linked (GlcNAc...) asparagine glycan. Cysteines 248 and 329 form a disulfide. A disulfide bridge connects residues cysteine 500 and cysteine 526. The N-linked (GlcNAc...) asparagine glycan is linked to asparagine 554. Residues cysteine 603 and cysteine 684 are joined by a disulfide bond. Residue threonine 640 is modified to Phosphothreonine. The tract at residues 692-1573 is b; sequence SYEIFEPPES…PDNIAAWYLR (882 aa). 3 positions are modified to sulfotyrosine: tyrosine 693, tyrosine 724, and tyrosine 726. A propeptide spans 738 to 1573 (activation peptide (connecting region)); sequence SFRNSSLNQE…PDNIAAWYLR (836 aa). N-linked (GlcNAc...) asparagine glycans are attached at residues asparagine 741, asparagine 752, asparagine 760, asparagine 776, and asparagine 782. Residue threonine 805 is glycosylated (O-linked (GalNAc...) threonine). Asparagine 821 carries N-linked (GlcNAc...) asparagine glycosylation. A compositionally biased stretch (polar residues) spans 822 to 831; the sequence is SSTAEHSSPY. A disordered region spans residues 822–842; the sequence is SSTAEHSSPYSEDPIEDPLQP. Serine 859 carries the phosphoserine; by FAM20C modification. Residues 894–927 are disordered; the sequence is LSQDTGSPSGMRPWEDLPSQDTGSPSRMRPWKDP. 2 tandem repeats follow at residues 895 to 911 and 912 to 928. Residues 895 to 928 are 2 X 17 AA tandem repeats; sequence SQDTGSPSGMRPWEDLPSQDTGSPSRMRPWKDPP. N-linked (GlcNAc...) asparagine glycosylation is found at asparagine 938 and asparagine 977. Disordered regions lie at residues 982–1001 and 1029–1048; these read WGES…HPKF and TRKK…PRTF. Residues 1029-1040 show a composition bias toward basic residues; that stretch reads TRKKKKEKHTHH. Asparagine 1074, asparagine 1083, asparagine 1103, and asparagine 1106 each carry an N-linked (GlcNAc...) asparagine glycan. Residues 1097–1157 are disordered; it reads LPDHNQNSSN…SSSPELSEML (61 aa). Over residues 1099 to 1111 the composition is skewed to polar residues; the sequence is DHNQNSSNDTGQA. The span at 1139–1154 shows a compositional bias: low complexity; that stretch reads HSTSDPSHRSSSPELS. 35 consecutive repeat copies span residues 1185 to 1193, 1194 to 1202, 1203 to 1211, 1212 to 1220, 1221 to 1229, 1230 to 1238, 1239 to 1247, 1248 to 1256, 1257 to 1265, 1266 to 1274, 1275 to 1283, 1284 to 1292, 1293 to 1301, 1302 to 1310, 1311 to 1319, 1320 to 1328, 1329 to 1337, 1338 to 1346, 1347 to 1355, 1356 to 1364, 1365 to 1373, 1374 to 1382, 1383 to 1391, 1392 to 1400, 1401 to 1409, 1410 to 1418, 1419 to 1427, 1428 to 1436, 1437 to 1445, 1446 to 1454, 1455 to 1463, 1464 to 1472, 1473 to 1481, 1482 to 1490, and 1493 to 1501. The interval 1185–1501 is 35 X 9 AA approximate tandem repeats of [TNP]-L-S-P-D-L-S-Q-T; sequence VISPDLSQVT…SPSSPTLNDT (317 aa). Positions 1341 to 1367 are disordered; it reads PELSQTNLSPALGQMPLSPDPSHTTLS. Asparagine 1479 carries N-linked (GlcNAc...) asparagine glycosylation. Asparagine 1499 carries N-linked (GlcNAc...) asparagine glycosylation. Residues tyrosine 1522, tyrosine 1538, and tyrosine 1543 each carry the sulfotyrosine modification. The N-linked (GlcNAc...) asparagine glycan is linked to asparagine 1559. Plastocyanin-like domains are found at residues 1578-1751 and 1761-1907; these read NRRN…LLIC and NMPM…DRDC. The F5/8 type A 3 domain occupies 1578-1907; the sequence is NRRNYYIAAE…TPFLIMDRDC (330 aa). A Sulfotyrosine modification is found at tyrosine 1593. Asparagine 1703 carries an N-linked (GlcNAc...) asparagine glycan. An intrachain disulfide couples cysteine 1725 to cysteine 1751. Residues histidine 1843 and histidine 1845 each coordinate Cu cation. 2 disulfides stabilise this stretch: cysteine 1907–cysteine 2061 and cysteine 2066–cysteine 2221. F5/8 type C domains lie at 1907–2061 and 2066–2221; these read CRMP…LQGC and CSTP…LFGC. Asparagine 2010 and asparagine 2209 each carry an N-linked (GlcNAc...) asparagine glycan.

The protein belongs to the multicopper oxidase family. In terms of assembly, factor Va, the activated form of factor V, is composed of a heavy chain and a light chain, non-covalently bound. The interaction between the two chains is calcium-dependent. Forms heterodimer with SERPINA5. Post-translationally, thrombin activates factor V proteolytically to the active cofactor, factor Va (formation of a heavy chain at the N-terminus and a light chain at the C-terminus). In terms of processing, sulfation is required for efficient thrombin cleavage and activation and for full procoagulant activity. Activated protein C inactivates factor V and factor Va by proteolytic degradation. Post-translationally, phosphorylated by FAM20C in the extracellular medium. In terms of tissue distribution, plasma.

It localises to the secreted. Its activity is regulated as follows. Inhibited by SERPINA5. In terms of biological role, central regulator of hemostasis. It serves as a critical cofactor for the prothrombinase activity of factor Xa that results in the activation of prothrombin to thrombin. The protein is Coagulation factor V (F5) of Homo sapiens (Human).